Reading from the N-terminus, the 175-residue chain is Peptide deformylase (175 aa).

Fe cation contacts are provided by Cys-99 and His-141. The active site involves Glu-142. A Fe cation-binding site is contributed by His-145.

The protein belongs to the polypeptide deformylase family. Fe(2+) serves as cofactor.

The enzyme catalyses N-terminal N-formyl-L-methionyl-[peptide] + H2O = N-terminal L-methionyl-[peptide] + formate. Removes the formyl group from the N-terminal Met of newly synthesized proteins. Requires at least a dipeptide for an efficient rate of reaction. N-terminal L-methionine is a prerequisite for activity but the enzyme has broad specificity at other positions. This is Peptide deformylase from Rickettsia prowazekii (strain Madrid E).